The chain runs to 88 residues: Small ribosomal subunit protein uS15 (88 aa).

The protein belongs to the universal ribosomal protein uS15 family. In terms of assembly, part of the 30S ribosomal subunit. Forms a bridge to the 50S subunit in the 70S ribosome, contacting the 23S rRNA.

Functionally, one of the primary rRNA binding proteins, it binds directly to 16S rRNA where it helps nucleate assembly of the platform of the 30S subunit by binding and bridging several RNA helices of the 16S rRNA. Its function is as follows. Forms an intersubunit bridge (bridge B4) with the 23S rRNA of the 50S subunit in the ribosome. This is Small ribosomal subunit protein uS15 from Psychrobacter cryohalolentis (strain ATCC BAA-1226 / DSM 17306 / VKM B-2378 / K5).